The chain runs to 79 residues: Acyl carrier protein (79 aa).

Positions Ser-2–Val-77 constitute a Carrier domain. Ser-37 bears the O-(pantetheine 4'-phosphoryl)serine mark.

It belongs to the acyl carrier protein (ACP) family. In terms of processing, 4'-phosphopantetheine is transferred from CoA to a specific serine of apo-ACP by AcpS. This modification is essential for activity because fatty acids are bound in thioester linkage to the sulfhydryl of the prosthetic group.

Its subcellular location is the cytoplasm. It participates in lipid metabolism; fatty acid biosynthesis. Functionally, carrier of the growing fatty acid chain in fatty acid biosynthesis. The chain is Acyl carrier protein from Leptothrix cholodnii (strain ATCC 51168 / LMG 8142 / SP-6) (Leptothrix discophora (strain SP-6)).